A 590-amino-acid chain; its full sequence is Kinetochore protein ndc-80 (590 aa).

Coiled coils occupy residues 269–342 (KGNE…KQIH) and 450–525 (ELET…MKLD).

It belongs to the NDC80/HEC1 family. As to quaternary structure, component of the NDC80 complex, which is composed of at least ndc-80 and him-10. The NDC80 complex interacts with knl-1. Interacts with the RZZ complex components rod-1 (via N-terminus) and zwl-1.

It localises to the nucleus. It is found in the chromosome. Its subcellular location is the centromere. The protein resides in the kinetochore. The protein localises to the cytoplasm. It localises to the cytoskeleton. In terms of biological role, acts as a component of the essential kinetochore-associated ndc-80 complex, which is required for chromosome segregation in mitosis and meiosis and spindle checkpoint activity. Plays a role in kinetochore assembly and recruits the checkpoint protein mdf-2 and the spindly-like protein spdl-1 to unattached kinetochores. Mediates the formation of end-on kinetochore-microtubule attachments through recruitment of spdl-1. The ndc-80 complex synergistically enhances the affinity of the ska-1 complex for microtubules and may allow the ndc-80 complex to track depolymerizing microtubules. The protein is Kinetochore protein ndc-80 (ndc-80) of Caenorhabditis elegans.